A 459-amino-acid chain; its full sequence is Cysteine--tRNA ligase (459 aa).

Cys-28 contacts Zn(2+). The 'HIGH' region motif lies at 30-40 (ITIYDLCHIGH). Positions 209, 234, and 238 each coordinate Zn(2+). The 'KMSKS' region motif lies at 266–270 (KMSKS). Residue Lys-269 coordinates ATP.

Belongs to the class-I aminoacyl-tRNA synthetase family. In terms of assembly, monomer. It depends on Zn(2+) as a cofactor.

Its subcellular location is the cytoplasm. The catalysed reaction is tRNA(Cys) + L-cysteine + ATP = L-cysteinyl-tRNA(Cys) + AMP + diphosphate. In Shewanella woodyi (strain ATCC 51908 / MS32), this protein is Cysteine--tRNA ligase.